The following is a 176-amino-acid chain: COA8 family protein CG14806, mitochondrial (176 aa).

Residues 1-23 constitute a mitochondrion transit peptide; the sequence is MNKCFRCQPRISLFQFSLPRCYA.

This sequence belongs to the COA8 family.

It localises to the mitochondrion inner membrane. In terms of biological role, may be required for cytochrome c complex (COX) assembly and function, COX being the terminal component of the mitochondrial respiratory chain. Its function is as follows. (Microbial infection) Required for optimal replication of E.chaffeensis. The protein is COA8 family protein CG14806, mitochondrial of Drosophila melanogaster (Fruit fly).